Reading from the N-terminus, the 496-residue chain is Cytochrome P450 monooxygenase ausR (496 aa).

The helical transmembrane segment at 12-32 (IGLYILWTIPVLFVIFKLLAP) threads the bilayer. Cys-435 contributes to the heme binding site.

The protein belongs to the cytochrome P450 family. The cofactor is heme.

It is found in the membrane. Its pathway is secondary metabolite biosynthesis; terpenoid biosynthesis. Functionally, cytochrome P450 monooxygenase; part of the gene cluster B that mediates the biosynthesis of the fungal meroterpenoid acetoxydehydroaustin. The first step of the pathway is the synthesis of 3,5-dimethylorsellinic acid by the polyketide synthase ausA. 3,5-dimethylorsellinic acid is then prenylated by the polyprenyl transferase ausN. Further epoxidation by the FAD-dependent monooxygenase ausM and cyclization by the probable terpene cyclase ausL lead to the formation of protoaustinoid A. Protoaustinoid A is then oxidized to spiro-lactone preaustinoid A3 by the combined action of the FAD-binding monooxygenases ausB and ausC, and the dioxygenase ausE. Acid-catalyzed keto-rearrangement and ring contraction of the tetraketide portion of preaustinoid A3 by ausJ lead to the formation of preaustinoid A4. The aldo-keto reductase ausK, with the help of ausH, is involved in the next step by transforming preaustinoid A4 into isoaustinone which is in turn hydroxylated by the P450 monooxygenase ausI to form austinolide. The cytochrome P450 monooxygenase ausG then modifies austinolide to austinol. Austinol is further acetylated to austin by the O-acetyltransferase ausP, which spontaneously changes to dehydroaustin. The cytochrome P450 monooxygenase then converts dehydroaustin is into 7-dehydrodehydroaustin. The hydroxylation catalyzed by ausR permits the second O-acetyltransferase ausQ to add an additional acetyl group to the molecule, leading to the formation of acetoxydehydroaustin. Due to genetic rearrangements of the clusters and the subsequent loss of some enzymes, the end product of the Penicillium brasilianum austinoid biosynthesis clusters is acetoxydehydroaustin. The polypeptide is Cytochrome P450 monooxygenase ausR (Penicillium brasilianum).